A 792-amino-acid chain; its full sequence is Phenylalanine--tRNA ligase beta subunit (792 aa).

A tRNA-binding domain is found at 39 to 147; sequence GESLGQVVVA…DDAPVGQALA (109 aa). The B5 domain maps to 400 to 475; sequence PQPARIRLRR…RIHGYDRVPT (76 aa). D453, D459, E462, and E463 together coordinate Mg(2+). The FDX-ACB domain occupies 698 to 791; sequence SRFPSVRRDL…IEREHRARIR (94 aa).

This sequence belongs to the phenylalanyl-tRNA synthetase beta subunit family. Type 1 subfamily. In terms of assembly, tetramer of two alpha and two beta subunits. It depends on Mg(2+) as a cofactor.

It localises to the cytoplasm. The catalysed reaction is tRNA(Phe) + L-phenylalanine + ATP = L-phenylalanyl-tRNA(Phe) + AMP + diphosphate + H(+). This chain is Phenylalanine--tRNA ligase beta subunit, found in Xanthomonas euvesicatoria pv. vesicatoria (strain 85-10) (Xanthomonas campestris pv. vesicatoria).